The sequence spans 299 residues: Pyridoxal 5'-phosphate synthase subunit PdxS (299 aa).

Position 24 (Asp-24) interacts with D-ribose 5-phosphate. Catalysis depends on Lys-81, which acts as the Schiff-base intermediate with D-ribose 5-phosphate. Gly-153 contacts D-ribose 5-phosphate. Position 165 (Arg-165) interacts with D-glyceraldehyde 3-phosphate. D-ribose 5-phosphate is bound by residues Gly-219 and Gly-240 to Ser-241.

Belongs to the PdxS/SNZ family. In terms of assembly, in the presence of PdxT, forms a dodecamer of heterodimers.

It carries out the reaction aldehydo-D-ribose 5-phosphate + D-glyceraldehyde 3-phosphate + L-glutamine = pyridoxal 5'-phosphate + L-glutamate + phosphate + 3 H2O + H(+). The protein operates within cofactor biosynthesis; pyridoxal 5'-phosphate biosynthesis. Functionally, catalyzes the formation of pyridoxal 5'-phosphate from ribose 5-phosphate (RBP), glyceraldehyde 3-phosphate (G3P) and ammonia. The ammonia is provided by the PdxT subunit. Can also use ribulose 5-phosphate and dihydroxyacetone phosphate as substrates, resulting from enzyme-catalyzed isomerization of RBP and G3P, respectively. The protein is Pyridoxal 5'-phosphate synthase subunit PdxS of Methanococcus maripaludis (strain C5 / ATCC BAA-1333).